Reading from the N-terminus, the 137-residue chain is ATP synthase epsilon chain (137 aa).

The protein belongs to the ATPase epsilon chain family. F-type ATPases have 2 components, CF(1) - the catalytic core - and CF(0) - the membrane proton channel. CF(1) has five subunits: alpha(3), beta(3), gamma(1), delta(1), epsilon(1). CF(0) has three main subunits: a, b and c.

It is found in the cell membrane. In terms of biological role, produces ATP from ADP in the presence of a proton gradient across the membrane. This Desulforudis audaxviator (strain MP104C) protein is ATP synthase epsilon chain.